A 426-amino-acid chain; its full sequence is Enolase (426 aa).

Glutamine 163 lines the (2R)-2-phosphoglycerate pocket. The active-site Proton donor is the glutamate 205. Residues aspartate 242, glutamate 286, and aspartate 313 each contribute to the Mg(2+) site. (2R)-2-phosphoglycerate-binding residues include lysine 338, arginine 367, serine 368, and lysine 389. Lysine 338 acts as the Proton acceptor in catalysis.

The protein belongs to the enolase family. Mg(2+) is required as a cofactor.

The protein localises to the cytoplasm. It is found in the secreted. It localises to the cell surface. It carries out the reaction (2R)-2-phosphoglycerate = phosphoenolpyruvate + H2O. It functions in the pathway carbohydrate degradation; glycolysis; pyruvate from D-glyceraldehyde 3-phosphate: step 4/5. Catalyzes the reversible conversion of 2-phosphoglycerate (2-PG) into phosphoenolpyruvate (PEP). It is essential for the degradation of carbohydrates via glycolysis. The polypeptide is Enolase (Helicobacter pylori (strain ATCC 700392 / 26695) (Campylobacter pylori)).